Here is a 96-residue protein sequence, read N- to C-terminus: CRISPR-associated endoribonuclease Cas2 (96 aa).

Residue aspartate 8 participates in Mg(2+) binding.

This sequence belongs to the CRISPR-associated endoribonuclease Cas2 protein family. As to quaternary structure, homodimer, forms a heterotetramer with a Cas1 homodimer. It depends on Mg(2+) as a cofactor.

CRISPR (clustered regularly interspaced short palindromic repeat), is an adaptive immune system that provides protection against mobile genetic elements (viruses, transposable elements and conjugative plasmids). CRISPR clusters contain sequences complementary to antecedent mobile elements and target invading nucleic acids. CRISPR clusters are transcribed and processed into CRISPR RNA (crRNA). Functions as a ssRNA-specific endoribonuclease. Involved in the integration of spacer DNA into the CRISPR cassette. This Chlorobaculum tepidum (strain ATCC 49652 / DSM 12025 / NBRC 103806 / TLS) (Chlorobium tepidum) protein is CRISPR-associated endoribonuclease Cas2.